Reading from the N-terminus, the 87-residue chain is Small ribosomal subunit protein bS20 (87 aa).

Residues 1–22 form a disordered region; the sequence is MAHHKSAIKRIKQNAKKNARNR.

It belongs to the bacterial ribosomal protein bS20 family.

Binds directly to 16S ribosomal RNA. This Pelobacter propionicus (strain DSM 2379 / NBRC 103807 / OttBd1) protein is Small ribosomal subunit protein bS20.